The primary structure comprises 285 residues: Bifunctional protein FolD (285 aa).

NADP(+) contacts are provided by residues 165–167, threonine 192, and valine 233; that span reads GRG.

It belongs to the tetrahydrofolate dehydrogenase/cyclohydrolase family. In terms of assembly, homodimer.

It catalyses the reaction (6R)-5,10-methylene-5,6,7,8-tetrahydrofolate + NADP(+) = (6R)-5,10-methenyltetrahydrofolate + NADPH. It carries out the reaction (6R)-5,10-methenyltetrahydrofolate + H2O = (6R)-10-formyltetrahydrofolate + H(+). It participates in one-carbon metabolism; tetrahydrofolate interconversion. Catalyzes the oxidation of 5,10-methylenetetrahydrofolate to 5,10-methenyltetrahydrofolate and then the hydrolysis of 5,10-methenyltetrahydrofolate to 10-formyltetrahydrofolate. The polypeptide is Bifunctional protein FolD (Corynebacterium jeikeium (strain K411)).